We begin with the raw amino-acid sequence, 299 residues long: Zinc import ATP-binding protein ZnuC (299 aa).

One can recognise an ABC transporter domain in the interval 13–228; sequence VSLANAGVQR…PEYMRLFGGT (216 aa). 45-52 lines the ATP pocket; it reads GPNGSGKS.

It belongs to the ABC transporter superfamily. Zinc importer (TC 3.A.1.15.5) family. The complex is composed of two ATP-binding proteins (ZnuC), two transmembrane proteins (ZnuB) and a solute-binding protein (ZnuA).

It is found in the cell inner membrane. The catalysed reaction is Zn(2+)(out) + ATP(in) + H2O(in) = Zn(2+)(in) + ADP(in) + phosphate(in) + H(+)(in). Its function is as follows. Part of the ABC transporter complex ZnuABC involved in zinc import. Responsible for energy coupling to the transport system. In Agrobacterium fabrum (strain C58 / ATCC 33970) (Agrobacterium tumefaciens (strain C58)), this protein is Zinc import ATP-binding protein ZnuC.